The following is a 127-amino-acid chain: Large ribosomal subunit protein bL12 (127 aa).

This sequence belongs to the bacterial ribosomal protein bL12 family. In terms of assembly, homodimer. Part of the ribosomal stalk of the 50S ribosomal subunit. Forms a multimeric L10(L12)X complex, where L10 forms an elongated spine to which 2 to 4 L12 dimers bind in a sequential fashion. Binds GTP-bound translation factors.

Functionally, forms part of the ribosomal stalk which helps the ribosome interact with GTP-bound translation factors. Is thus essential for accurate translation. The sequence is that of Large ribosomal subunit protein bL12 from Syntrophobacter fumaroxidans (strain DSM 10017 / MPOB).